The chain runs to 1533 residues: Maternal protein pumilio (1533 aa).

Disordered regions lie at residues 102 to 149 (ACGD…TIGM), 207 to 276 (AAAV…QQHP), 304 to 331 (YDHH…PGAG), and 382 to 452 (WEKS…AGIL). The segment covering 103 to 117 (CGDDGHGIDNPDKWK) has biased composition (basic and acidic residues). Over residues 133-149 (PGNGSNGGPGAIGTIGM) the composition is skewed to gly residues. Residues 207 to 237 (AAAVAAQQQHQHPHQQHPQQQQQQQQAQNQG) show a composition bias toward low complexity. The segment covering 243–255 (MGGGNGLGNGNGL) has biased composition (gly residues). Low complexity predominate over residues 256-276 (GIQHPGQQQQQQQQQQQQQHP). Phosphoserine occurs at positions 453, 468, 470, and 477. Polar residues predominate over residues 470-479 (SPTNKDSSLS). 4 disordered regions span residues 470–558 (SPTN…NLLF), 697–725 (VGAP…QQQQ), 846–912 (VLVP…AFSP), and 975–1008 (LGAP…QQQQ). The span at 483–503 (PHLRNLKFDDNDKSRDDKEKA) shows a compositional bias: basic and acidic residues. At Ser505 the chain carries Phosphoserine. Positions 863–875 (PQLYQPQPQTAQQ) are enriched in low complexity. Positions 1091 to 1428 (GRSRLLEDFR…HINAKLEKYY (338 aa)) constitute a PUM-HD domain. 8 Pumilio repeats span residues 1111-1146 (DLAN…MVFS), 1147-1182 (EILA…TLGM), 1183-1218 (QVKG…EIVH), 1219-1254 (ELDG…FIIN), 1255-1290 (AFKG…PILD), 1291-1326 (ELHE…ILIN), 1327-1362 (SVRG…GLID), and 1366-1402 (TFND…KLMT). The tract at residues 1126 to 1130 (SRFIQ) is adenine-nucleotide binding in RNA target. The segment at 1162–1166 (NYVIQ) is uracil-nucleotide binding in RNA target. Residues 1198 to 1202 (CRVIQ) are adenine-nucleotide binding in RNA target. Residues 1234–1238 (NHVVQ) form a non-specific-nucleotide binding in RNA target region. An adenine-nucleotide binding in RNA target region spans residues 1270 to 1274 (CRVIQ). The interval 1306-1310 (NYVIQ) is uracil-nucleotide binding in RNA target. Residues 1342–1346 (SNVVE) are guanine-nucleotide binding in RNA target. A uracil-nucleotide binding in RNA target region spans residues 1382–1386 (NYVVQ). The disordered stretch occupies residues 1494 to 1533 (AMVVEPSSPDASESSSSVVSGAVNSSLGPIGPPTNGNVVL). Residues 1496-1519 (VVEPSSPDASESSSSVVSGAVNSS) show a composition bias toward low complexity.

In terms of assembly, interacts with nanos (nos) and brat. Acts via the formation of a quaternary complex composed of pum, nanos, brat and the 3'-UTR mRNA of hb.

The protein resides in the cytoplasm. It is found in the cytoplasmic ribonucleoprotein granule. Its function is as follows. Sequence-specific RNA-binding protein that acts as a post-transcriptional repressor by binding the 3'-UTR of mRNA targets. Binds to an RNA consensus sequence, the Pumilio Response Element (PRE), 5'-UGUANAUA-3', that is related to the Nanos Response Element (NRE). Mediates post-transcriptional repression of transcripts via different mechanisms: acts via direct recruitment of deadenylase complexes leading to translational inhibition and mRNA degradation. Also mediates deadenylation-independent repression by promoting accessibility of miRNAs. Mediates post-transcriptional silencing of E2f mRNA by binding to its 3'-UTR and promoting miRNA regulation. Required for abdominal development and to support proliferation and self-renewal of germ cells. Pum is the only gene required for nanos (nos) activity that is not also required for posterior localization of germline determinants. Pum is required during embryogenesis when nanos activity apparently moves anteriorly from the posterior pole. In Drosophila melanogaster (Fruit fly), this protein is Maternal protein pumilio (pum).